Reading from the N-terminus, the 139-residue chain is Ribulose bisphosphate carboxylase small subunit, chromosomal (139 aa).

Belongs to the RuBisCO small chain family. Heterohexadecamer of 8 large and 8 small subunits.

In terms of biological role, ruBisCO catalyzes two reactions: the carboxylation of D-ribulose 1,5-bisphosphate, the primary event in carbon dioxide fixation, as well as the oxidative fragmentation of the pentose substrate. Both reactions occur simultaneously and in competition at the same active site. Although the small subunit is not catalytic it is essential for maximal activity. This is Ribulose bisphosphate carboxylase small subunit, chromosomal from Cupriavidus necator (Alcaligenes eutrophus).